Reading from the N-terminus, the 313-residue chain is MAESPAAEAIILPGAAAGGGVLPHLSGLQAPGTSPLTTSSVWDPTASADWDNERASNQCVLRIKRDIMSIYKEPPPGMFVVPDPHDMTKIHALITGPFDTPYEGGFFLFLFRCPPDYPIHPPRVKLMTTGNNTVRFNPNFYRNGKVCLSILGTWTGPAWSPAQSLSSVLISIQSLMTENPYHNEPGFEQERHSGDSKNYNECIRHETIRVAVCEMLEGKCQCPDALRSVMEKSFMEYYDFYEAVCKDRFHLQGQNMQDPFGEKRGHFDYQSLLSRLQTIHQRVREKHRKETVDIDSDSSSSETETDTQGSSNP.

The UBC core domain occupies 58–212; the sequence is QCVLRIKRDI…IRHETIRVAV (155 aa). Cys147 (glycyl thioester intermediate) is an active-site residue. A disordered region spans residues 283 to 313; the sequence is VREKHRKETVDIDSDSSSSETETDTQGSSNP. The segment covering 297–313 has biased composition (low complexity); it reads DSSSSETETDTQGSSNP.

The protein belongs to the ubiquitin-conjugating enzyme family.

It is found in the cytoplasm. It localises to the nucleus. The catalysed reaction is S-ubiquitinyl-[E1 ubiquitin-activating enzyme]-L-cysteine + [E2 ubiquitin-conjugating enzyme]-L-cysteine = [E1 ubiquitin-activating enzyme]-L-cysteine + S-ubiquitinyl-[E2 ubiquitin-conjugating enzyme]-L-cysteine.. The protein operates within protein modification; protein ubiquitination. In terms of biological role, catalyzes the covalent attachment of ubiquitin to other proteins. May be involved in apoptosis regulation. This chain is Ubiquitin-conjugating enzyme E2 Z (ube2z), found in Xenopus tropicalis (Western clawed frog).